Reading from the N-terminus, the 210-residue chain is Glutathione S-transferase P 2 (210 aa).

A GST N-terminal domain is found at 1–82; sequence SGYTLTYFPL…LLARYGLSGS (82 aa). Residues Tyr7, Arg13, Trp38, Lys46, 53 to 54, and 66 to 67 contribute to the glutathione site; these read QI and QS. Positions 83 to 204 constitute a GST C-terminal domain; sequence NEREIAINEM…KSEGRKRRPI (122 aa).

It belongs to the GST superfamily. Pi family. As to quaternary structure, homodimer. In terms of tissue distribution, liver, kidney, muscle, skin, lung and ovary.

It carries out the reaction RX + glutathione = an S-substituted glutathione + a halide anion + H(+). Conjugation of reduced glutathione to a wide number of exogenous and endogenous hydrophobic electrophiles. The chain is Glutathione S-transferase P 2 from Bufo bufo (European toad).